The chain runs to 39 residues: Large ribosomal subunit protein bL36 (39 aa).

The protein belongs to the bacterial ribosomal protein bL36 family.

The protein is Large ribosomal subunit protein bL36 of Oenococcus oeni (strain ATCC BAA-331 / PSU-1).